We begin with the raw amino-acid sequence, 305 residues long: Homoserine O-acetyltransferase (305 aa).

Cys-132 (acyl-thioester intermediate) is an active-site residue. Positions 153 and 181 each coordinate substrate. The active-site Proton acceptor is the His-221. Glu-223 is an active-site residue. Arg-235 is a substrate binding site.

It belongs to the MetA family.

It is found in the cytoplasm. It catalyses the reaction L-homoserine + acetyl-CoA = O-acetyl-L-homoserine + CoA. It participates in amino-acid biosynthesis; L-methionine biosynthesis via de novo pathway; O-acetyl-L-homoserine from L-homoserine: step 1/1. Functionally, transfers an acetyl group from acetyl-CoA to L-homoserine, forming acetyl-L-homoserine. The chain is Homoserine O-acetyltransferase from Leuconostoc mesenteroides subsp. mesenteroides (strain ATCC 8293 / DSM 20343 / BCRC 11652 / CCM 1803 / JCM 6124 / NCDO 523 / NBRC 100496 / NCIMB 8023 / NCTC 12954 / NRRL B-1118 / 37Y).